Consider the following 304-residue polypeptide: GLLPKCKLVPEQISFILSTRENRNGVFLTLDSLKKGGILNKSDLSSTQVVFLIHGFISSANNSNYMDMTKALLEKNDCMVISIDWRNGACTNEFQILKFIGYPKAVENTRTVGKYIADFSKLLMQKYKVSLANIRLIGHSLGAQIAGFAGKEYQKFKLGKYPEIIGLDPAGPLFKSNDCSQRICETDAHYVQIIHTSNNLGTERTLGTVDFYMNNGYNQPGCYYSFIGETCSHTRAVQYFTECIRHECCLIGVPQSKNPQPVSKCTRNECVCVGLNAKRYPKTGSFYVPVESKAPYCNNKGKKI.

The cysteines at positions 6 and 90 are disulfide-linked. Asn61 carries an N-linked (GlcNAc...) asparagine glycan. The active-site Nucleophile is the Ser140. The Charge relay system role is filled by Asp168. 2 disulfide bridges follow: Cys179/Cys184 and Cys222/Cys231. His233 (charge relay system) is an active-site residue. Disulfide bonds link Cys248-Cys272, Cys249-Cys297, and Cys265-Cys270.

The protein belongs to the AB hydrolase superfamily. Lipase family. Expressed by the venom gland.

It is found in the secreted. It carries out the reaction a 1,2-diacyl-sn-glycero-3-phosphocholine + H2O = a 2-acyl-sn-glycero-3-phosphocholine + a fatty acid + H(+). Catalyzes the hydrolysis of phosphatidylcholine with phospholipase A1 activity. May act as an allergen and induce hemolytic activity. The chain is Phospholipase A1 from Vespa velutina (Asian yellow-legged hornet).